The chain runs to 530 residues: MSLQPLTAVNCGSLVQPGFSLLDLEGDVYLFGQKGWPKRSCPTGIFGVRIKKGELKLRAISFSNNSSYLPPLRCPAIAHFEAQDGKPECYLIHGGRTPNNELSSSLYMLSVDSRGCNRKVTLRCEEKELVGDVPSARYGHTLSVINSRGKTACVLFGGRSYMPPTERTTQNWNSVGDCPPQVYLIDLEFGCCTAHTLPELTDGQSFHVALARQDCVYFLGGHILSSDCRPSRLIRLHVELLLGSPVLTCTILHEGLTITSAIASPIGYHEYIIFGGYQSETQKRMECTYVGLDDVGVHMESREPPQWTSEISHSRTWFGGSLGKGTALVAIPSEGNPTPPEAYHFYQVSFQKEQDGEATAQGCSQESTDFEDSAPLEDSEELYFGREPHELEYSSDVEGDTYNEEDEEDESQTGYWIKCCLSCQVDPNIWEPYYSTELTRPAMIFCSRGEGGHWVHAQCMELPESLLLQLSQDNSKYFCLDHGGLPKQEMTPPKQMLPVKRVPMKMTHRKAPVSLKMTPAKKTFLRRLFD.

Residues Trp416–Leu485 form a PHD-type; atypical zinc finger. Residues Cys419, Cys423, Cys446, His453, His456, Cys459, Cys479, and His482 each coordinate Zn(2+).

It belongs to the RAG2 family. Component of the RAG complex composed of core components rag1 and rag2.

It localises to the nucleus. In terms of biological role, core component of the RAG complex, a multiprotein complex that mediates the DNA cleavage phase during V(D)J recombination. V(D)J recombination assembles a diverse repertoire of immunoglobulin and T-cell receptor genes in developing B and T lymphocytes through rearrangement of different V (variable), in some cases D (diversity), and J (joining) gene segments. DNA cleavage by the RAG complex occurs in 2 steps: a first nick is introduced in the top strand immediately upstream of the heptamer, generating a 3'-hydroxyl group that can attack the phosphodiester bond on the opposite strand in a direct transesterification reaction, thereby creating 4 DNA ends: 2 hairpin coding ends and 2 blunt, 5'-phosphorylated ends. In the RAG complex, rag2 is not the catalytic component but is required for all known catalytic activities mediated by RAG1. It probably acts as a sensor of chromatin state that recruits the RAG complex to H3K4me3. This Danio rerio (Zebrafish) protein is V(D)J recombination-activating protein 2 (rag2).